The following is a 179-amino-acid chain: Large ribosomal subunit protein uL6 (179 aa).

Belongs to the universal ribosomal protein uL6 family. Part of the 50S ribosomal subunit.

Its function is as follows. This protein binds to the 23S rRNA, and is important in its secondary structure. It is located near the subunit interface in the base of the L7/L12 stalk, and near the tRNA binding site of the peptidyltransferase center. This is Large ribosomal subunit protein uL6 from Syntrophotalea carbinolica (strain DSM 2380 / NBRC 103641 / GraBd1) (Pelobacter carbinolicus).